The primary structure comprises 485 residues: Glutamyl-tRNA(Gln) amidotransferase subunit A (485 aa).

Active-site charge relay system residues include Lys-79 and Ser-154. Catalysis depends on Ser-178, which acts as the Acyl-ester intermediate.

It belongs to the amidase family. GatA subfamily. Heterotrimer of A, B and C subunits.

The enzyme catalyses L-glutamyl-tRNA(Gln) + L-glutamine + ATP + H2O = L-glutaminyl-tRNA(Gln) + L-glutamate + ADP + phosphate + H(+). Allows the formation of correctly charged Gln-tRNA(Gln) through the transamidation of misacylated Glu-tRNA(Gln) in organisms which lack glutaminyl-tRNA synthetase. The reaction takes place in the presence of glutamine and ATP through an activated gamma-phospho-Glu-tRNA(Gln). This chain is Glutamyl-tRNA(Gln) amidotransferase subunit A, found in Carboxydothermus hydrogenoformans (strain ATCC BAA-161 / DSM 6008 / Z-2901).